Here is a 198-residue protein sequence, read N- to C-terminus: dCTP deaminase (198 aa).

DCTP-binding positions include 99-104 (RSSLGR), 125-127 (TLE), and glutamine 144. Glutamate 127 functions as the Proton donor/acceptor in the catalytic mechanism.

It belongs to the dCTP deaminase family. Homotrimer.

It carries out the reaction dCTP + H2O + H(+) = dUTP + NH4(+). It participates in pyrimidine metabolism; dUMP biosynthesis; dUMP from dCTP (dUTP route): step 1/2. In terms of biological role, catalyzes the deamination of dCTP to dUTP. The chain is dCTP deaminase from Rhodopirellula baltica (strain DSM 10527 / NCIMB 13988 / SH1).